Consider the following 150-residue polypeptide: Large ribosomal subunit protein uL15 (150 aa).

A disordered region spans residues 1–52; the sequence is MITLNTLKDSTRKRKPRKRVGRGIGSKHGKTCGRGEKGAGARSGYKRRLGKE. Positions 11–31 are enriched in basic residues; that stretch reads TRKRKPRKRVGRGIGSKHGKT.

Belongs to the universal ribosomal protein uL15 family. Part of the 50S ribosomal subunit.

In terms of biological role, binds to the 23S rRNA. This Protochlamydia amoebophila (strain UWE25) protein is Large ribosomal subunit protein uL15.